The following is a 264-amino-acid chain: 3-methyl-2-oxobutanoate hydroxymethyltransferase (264 aa).

2 residues coordinate Mg(2+): D45 and D84. 3-methyl-2-oxobutanoate contacts are provided by residues 45 to 46, D84, and K112; that span reads DS. A Mg(2+)-binding site is contributed by E114. E181 serves as the catalytic Proton acceptor.

The protein belongs to the PanB family. As to quaternary structure, homodecamer; pentamer of dimers. Mg(2+) is required as a cofactor.

The protein resides in the cytoplasm. The catalysed reaction is 3-methyl-2-oxobutanoate + (6R)-5,10-methylene-5,6,7,8-tetrahydrofolate + H2O = 2-dehydropantoate + (6S)-5,6,7,8-tetrahydrofolate. Its pathway is cofactor biosynthesis; (R)-pantothenate biosynthesis; (R)-pantoate from 3-methyl-2-oxobutanoate: step 1/2. In terms of biological role, catalyzes the reversible reaction in which hydroxymethyl group from 5,10-methylenetetrahydrofolate is transferred onto alpha-ketoisovalerate to form ketopantoate. The protein is 3-methyl-2-oxobutanoate hydroxymethyltransferase of Escherichia coli (strain 55989 / EAEC).